The sequence spans 498 residues: Cytochrome P450 71D15 (498 aa).

A helical; Signal-anchor for type II membrane protein transmembrane segment spans residues 3–23; the sequence is LLQLWSALIILVVTYTISLLI. Position 437 (cysteine 437) interacts with heme.

The protein belongs to the cytochrome P450 family. Heme is required as a cofactor.

It localises to the endoplasmic reticulum membrane. The catalysed reaction is (4S)-limonene + reduced [NADPH--hemoprotein reductase] + O2 = (1S,6R)-isopiperitenol + oxidized [NADPH--hemoprotein reductase] + H2O + H(+). Its function is as follows. Hydroxylates (-)-(4S)-limonene to (-)-trans-isopiperitenol, a precursor of (-)-menthol, responsible for the cooling sensation of peppermint. Fluorinated substrate analogs are hydroxylated with the same regio- and stereochemistry. This chain is Cytochrome P450 71D15 (CYP71D15), found in Mentha piperita (Peppermint).